The primary structure comprises 388 residues: Succinate--CoA ligase [ADP-forming] subunit beta (388 aa).

Positions 9 to 244 (KQLFAEFGLP…PSQEDKREAH (236 aa)) constitute an ATP-grasp domain. ATP contacts are provided by residues lysine 46, 53 to 55 (GRG), glutamate 99, serine 102, and glutamate 107. The Mg(2+) site is built by asparagine 199 and aspartate 213. Residues asparagine 264 and 321-323 (GIV) each bind substrate.

Belongs to the succinate/malate CoA ligase beta subunit family. Heterotetramer of two alpha and two beta subunits. It depends on Mg(2+) as a cofactor.

The catalysed reaction is succinate + ATP + CoA = succinyl-CoA + ADP + phosphate. The enzyme catalyses GTP + succinate + CoA = succinyl-CoA + GDP + phosphate. Its pathway is carbohydrate metabolism; tricarboxylic acid cycle; succinate from succinyl-CoA (ligase route): step 1/1. In terms of biological role, succinyl-CoA synthetase functions in the citric acid cycle (TCA), coupling the hydrolysis of succinyl-CoA to the synthesis of either ATP or GTP and thus represents the only step of substrate-level phosphorylation in the TCA. The beta subunit provides nucleotide specificity of the enzyme and binds the substrate succinate, while the binding sites for coenzyme A and phosphate are found in the alpha subunit. In Vibrio vulnificus (strain YJ016), this protein is Succinate--CoA ligase [ADP-forming] subunit beta.